The following is a 224-amino-acid chain: 7-cyano-7-deazaguanine synthase (224 aa).

ATP is bound at residue 8-18; that stretch reads VSGGADSATVL. 4 residues coordinate Zn(2+): Cys189, Cys199, Cys202, and Cys205.

The protein belongs to the QueC family. Zn(2+) serves as cofactor.

The enzyme catalyses 7-carboxy-7-deazaguanine + NH4(+) + ATP = 7-cyano-7-deazaguanine + ADP + phosphate + H2O + H(+). Its pathway is purine metabolism; 7-cyano-7-deazaguanine biosynthesis. Catalyzes the ATP-dependent conversion of 7-carboxy-7-deazaguanine (CDG) to 7-cyano-7-deazaguanine (preQ(0)). In Rickettsia felis (strain ATCC VR-1525 / URRWXCal2) (Rickettsia azadi), this protein is 7-cyano-7-deazaguanine synthase.